Reading from the N-terminus, the 109-residue chain is Nucleoid-associated protein Ldb1634 (109 aa).

The tract at residues Met18–Glu40 is disordered.

This sequence belongs to the YbaB/EbfC family. As to quaternary structure, homodimer.

It localises to the cytoplasm. The protein resides in the nucleoid. Its function is as follows. Binds to DNA and alters its conformation. May be involved in regulation of gene expression, nucleoid organization and DNA protection. This chain is Nucleoid-associated protein Ldb1634, found in Lactobacillus delbrueckii subsp. bulgaricus (strain ATCC 11842 / DSM 20081 / BCRC 10696 / JCM 1002 / NBRC 13953 / NCIMB 11778 / NCTC 12712 / WDCM 00102 / Lb 14).